Reading from the N-terminus, the 273-residue chain is Glucosamine-6-phosphate deaminase (273 aa).

Asp-72 (proton acceptor; for enolization step) is an active-site residue. Asp-141 acts as the For ring-opening step in catalysis. The Proton acceptor; for ring-opening step role is filled by His-143. Residue Glu-148 is the For ring-opening step of the active site.

It belongs to the glucosamine/galactosamine-6-phosphate isomerase family. Homohexamer.

Its subcellular location is the cytoplasm. The catalysed reaction is alpha-D-glucosamine 6-phosphate + H2O = beta-D-fructose 6-phosphate + NH4(+). It functions in the pathway nucleotide-sugar biosynthesis; UDP-N-acetyl-alpha-D-glucosamine biosynthesis; alpha-D-glucosamine 6-phosphate from D-fructose 6-phosphate: step 1/1. Functionally, catalyzes the reversible conversion of alpha-D-glucosamine 6-phosphate (GlcN-6P) into beta-D-fructose 6-phosphate (Fru-6P) and ammonium ion, a regulatory reaction step in de novo uridine diphosphate-N-acetyl-alpha-D-glucosamine (UDP-GlcNAc) biosynthesis via hexosamine pathway. The polypeptide is Glucosamine-6-phosphate deaminase (Drosophila melanogaster (Fruit fly)).